Reading from the N-terminus, the 216-residue chain is 3-isopropylmalate dehydratase small subunit (216 aa).

This sequence belongs to the LeuD family. LeuD type 1 subfamily. Heterodimer of LeuC and LeuD.

The enzyme catalyses (2R,3S)-3-isopropylmalate = (2S)-2-isopropylmalate. It functions in the pathway amino-acid biosynthesis; L-leucine biosynthesis; L-leucine from 3-methyl-2-oxobutanoate: step 2/4. Functionally, catalyzes the isomerization between 2-isopropylmalate and 3-isopropylmalate, via the formation of 2-isopropylmaleate. The protein is 3-isopropylmalate dehydratase small subunit of Polaromonas sp. (strain JS666 / ATCC BAA-500).